Here is a 523-residue protein sequence, read N- to C-terminus: Excitatory amino acid transporter 3 (523 aa).

Residues Met1 to His18 lie on the Cytoplasmic side of the membrane. A helical membrane pass occupies residues Trp19–Val38. Topologically, residues Arg39–Arg61 are extracellular. Residues Met62 to Leu82 traverse the membrane as a helical segment. Residues Asp83–Arg93 are Cytoplasmic-facing. A helical transmembrane segment spans residues Ala94 to Val114. Na(+) is bound by residues Tyr98, Thr101, and Thr102. At Ser115 to Leu204 the chain is on the extracellular side. 3 N-linked (GlcNAc...) asparagine glycosylation sites follow: Asn128, Asn178, and Asn194. Residues Tyr205–Met228 form a helical membrane-spanning segment. Topologically, residues Gly229–Asp237 are cytoplasmic. The helical transmembrane segment at Phe238–Ile265 threads the bilayer. The Extracellular portion of the chain corresponds to Ala266–Met285. A helical transmembrane segment spans residues Ala286–Val307. Residues Val308 to Pro312 lie on the Cytoplasmic side of the membrane. Positions Phe313–Ala343 form an intramembrane region, discontinuously helical. 2 residues coordinate L-aspartate: Ser330 and Ser332. At Glu344–Arg352 the chain is on the cytoplasmic side. A helical transmembrane segment spans residues Ile353 to Phe379. Na(+) is bound by residues Gly361, Thr363, Asn365, and Asp367. Thr369 contributes to the L-aspartate binding site. The Extracellular segment spans residues Ile380 to Gln392. Positions Ile393–Gly426 form an intramembrane region, discontinuously helical. Na(+) is bound by residues Ser404, Ile405, and Ala407. Position 410 (Val410) interacts with L-aspartate. The Extracellular portion of the chain corresponds to Leu427–Asp439. Residues Trp440 to Val461 form a helical membrane-spanning segment. The L-aspartate site is built by Arg446, Thr447, and Asn450. The Na(+) site is built by Asn450 and Asp454. The Cytoplasmic segment spans residues Glu462–Phe523. Phosphoserine is present on residues Ser516 and Ser521.

Belongs to the dicarboxylate/amino acid:cation symporter (DAACS) (TC 2.A.23) family. SLC1A1 subfamily. In terms of assembly, homotrimer. Interacts with ARL6IP5. Interacts with RTN2 (via N-terminus); the interaction promotes cell surface expression of SLC1A1. Interacts with SORCS2; this interaction is important for normal expression at the cell membrane. In terms of tissue distribution, detected on neurons in the brain cortex, dentate gyrus and hippocampus CA2 region (at protein level). Expressed in whole brain, brain cortex, hippocampus, cerebellum, lung, kidney, small intestine and skeletal muscle. Expressed in the renal outer medulla, medullary ray and cortex (at protein level).

Its subcellular location is the cell membrane. It is found in the apical cell membrane. The protein localises to the synapse. The protein resides in the synaptosome. It localises to the early endosome membrane. Its subcellular location is the late endosome membrane. It is found in the recycling endosome membrane. The catalysed reaction is K(+)(in) + L-glutamate(out) + 3 Na(+)(out) + H(+)(out) = K(+)(out) + L-glutamate(in) + 3 Na(+)(in) + H(+)(in). The enzyme catalyses K(+)(in) + L-aspartate(out) + 3 Na(+)(out) + H(+)(out) = K(+)(out) + L-aspartate(in) + 3 Na(+)(in) + H(+)(in). It carries out the reaction D-aspartate(out) + K(+)(in) + 3 Na(+)(out) + H(+)(out) = D-aspartate(in) + K(+)(out) + 3 Na(+)(in) + H(+)(in). It catalyses the reaction K(+)(in) + L-cysteine(out) + 3 Na(+)(out) + H(+)(out) = K(+)(out) + L-cysteine(in) + 3 Na(+)(in) + H(+)(in). Functionally, sodium-dependent, high-affinity amino acid transporter that mediates the uptake of L-glutamate and also L-aspartate and D-aspartate. Can also transport L-cysteine. Functions as a symporter that transports one amino acid molecule together with two or three Na(+) ions and one proton, in parallel with the counter-transport of one K(+) ion. Mediates Cl(-) flux that is not coupled to amino acid transport; this avoids the accumulation of negative charges due to aspartate and Na(+) symport. Plays an important role in L-glutamate and L-aspartate reabsorption in renal tubuli. Plays a redundant role in the rapid removal of released glutamate from the synaptic cleft, which is essential for terminating the postsynaptic action of glutamate. Contributes to glutathione biosynthesis and protection against oxidative stress via its role in L-glutamate and L-cysteine transport. Negatively regulated by ARL6IP5. The chain is Excitatory amino acid transporter 3 (Slc1a1) from Mus musculus (Mouse).